A 591-amino-acid chain; its full sequence is L-fucose isomerase (591 aa).

Catalysis depends on proton acceptor residues Glu-337 and Asp-361. Residues Glu-337, Asp-361, and His-528 each coordinate Mn(2+).

Belongs to the L-fucose isomerase family. Homohexamer. It depends on Mn(2+) as a cofactor.

The protein resides in the cytoplasm. The catalysed reaction is L-fucose = L-fuculose. It functions in the pathway carbohydrate degradation; L-fucose degradation; L-lactaldehyde and glycerone phosphate from L-fucose: step 1/3. Its function is as follows. Converts the aldose L-fucose into the corresponding ketose L-fuculose. The chain is L-fucose isomerase from Escherichia coli O6:K15:H31 (strain 536 / UPEC).